Reading from the N-terminus, the 248-residue chain is 1-(5-phosphoribosyl)-5-[(5-phosphoribosylamino)methylideneamino] imidazole-4-carboxamide isomerase (248 aa).

Catalysis depends on aspartate 8, which acts as the Proton acceptor. Residue aspartate 131 is the Proton donor of the active site.

This sequence belongs to the HisA/HisF family.

It is found in the cytoplasm. The catalysed reaction is 1-(5-phospho-beta-D-ribosyl)-5-[(5-phospho-beta-D-ribosylamino)methylideneamino]imidazole-4-carboxamide = 5-[(5-phospho-1-deoxy-D-ribulos-1-ylimino)methylamino]-1-(5-phospho-beta-D-ribosyl)imidazole-4-carboxamide. Its pathway is amino-acid biosynthesis; L-histidine biosynthesis; L-histidine from 5-phospho-alpha-D-ribose 1-diphosphate: step 4/9. The sequence is that of 1-(5-phosphoribosyl)-5-[(5-phosphoribosylamino)methylideneamino] imidazole-4-carboxamide isomerase from Paracidovorax citrulli (strain AAC00-1) (Acidovorax citrulli).